The chain runs to 411 residues: Bifunctional protein GlmU (411 aa).

The pyrophosphorylase stretch occupies residues 1–204 (MDAVILCAGK…ENNIKGIKLN (204 aa)). Residues 6–9 (LCAG), glutamine 74, and glycine 79 contribute to the UTP site. N-acetyl-alpha-D-glucosamine 1-phosphate is bound by residues threonine 80, glycine 132, glutamate 144, and asparagine 158. The interval 205-224 (GYWNDIGKPWDLLDANTHIL) is linker. An N-acetyltransferase region spans residues 225 to 411 (KNIKTDIKGK…EEIIIKTKRK (187 aa)). Residue histidine 308 is the Proton acceptor of the active site. Positions 384 and 401 each coordinate acetyl-CoA.

It in the N-terminal section; belongs to the N-acetylglucosamine-1-phosphate uridyltransferase family. This sequence in the C-terminal section; belongs to the transferase hexapeptide repeat family.

It catalyses the reaction N-acetyl-alpha-D-glucosamine 1-phosphate + UTP + H(+) = UDP-N-acetyl-alpha-D-glucosamine + diphosphate. It carries out the reaction alpha-D-glucosamine 1-phosphate + acetyl-CoA = N-acetyl-alpha-D-glucosamine 1-phosphate + CoA + H(+). The protein operates within nucleotide-sugar biosynthesis; UDP-N-acetyl-alpha-D-glucosamine biosynthesis; N-acetyl-alpha-D-glucosamine 1-phosphate from alpha-D-glucosamine 6-phosphate (route II): step 2/2. Its pathway is nucleotide-sugar biosynthesis; UDP-N-acetyl-alpha-D-glucosamine biosynthesis; UDP-N-acetyl-alpha-D-glucosamine from N-acetyl-alpha-D-glucosamine 1-phosphate: step 1/1. Functionally, catalyzes the last two sequential reactions in the de novo biosynthetic pathway for UDP-N-acetyl-glucosamine (UDP-GlcNAc). Responsible for the acetylation of GlcN-1-P to GlcNAc-1-P, and for the uridyl transfer from UTP to GlcNAc-1-P, to produce UDP-GlcNAc and pyrophosphate. This is Bifunctional protein GlmU from Methanococcus aeolicus (strain ATCC BAA-1280 / DSM 17508 / OCM 812 / Nankai-3).